The following is a 286-amino-acid chain: Bifunctional protein FolD (286 aa).

NADP(+) is bound by residues 166–168 and I232; that span reads GAS.

It belongs to the tetrahydrofolate dehydrogenase/cyclohydrolase family. As to quaternary structure, homodimer.

The enzyme catalyses (6R)-5,10-methylene-5,6,7,8-tetrahydrofolate + NADP(+) = (6R)-5,10-methenyltetrahydrofolate + NADPH. The catalysed reaction is (6R)-5,10-methenyltetrahydrofolate + H2O = (6R)-10-formyltetrahydrofolate + H(+). It participates in one-carbon metabolism; tetrahydrofolate interconversion. Its function is as follows. Catalyzes the oxidation of 5,10-methylenetetrahydrofolate to 5,10-methenyltetrahydrofolate and then the hydrolysis of 5,10-methenyltetrahydrofolate to 10-formyltetrahydrofolate. In Vibrio campbellii (strain ATCC BAA-1116), this protein is Bifunctional protein FolD.